A 357-amino-acid chain; its full sequence is Protein MGF 360-8L (357 aa).

It belongs to the asfivirus MGF 360 family.

Plays a role in virus cell tropism, and may be required for efficient virus replication in macrophages. The sequence is that of Protein MGF 360-8L from African swine fever virus (isolate Tick/South Africa/Pretoriuskop Pr4/1996) (ASFV).